The following is a 95-amino-acid chain: Aspartyl/glutamyl-tRNA(Asn/Gln) amidotransferase subunit C (95 aa).

The protein belongs to the GatC family. As to quaternary structure, heterotrimer of A, B and C subunits.

It catalyses the reaction L-glutamyl-tRNA(Gln) + L-glutamine + ATP + H2O = L-glutaminyl-tRNA(Gln) + L-glutamate + ADP + phosphate + H(+). The enzyme catalyses L-aspartyl-tRNA(Asn) + L-glutamine + ATP + H2O = L-asparaginyl-tRNA(Asn) + L-glutamate + ADP + phosphate + 2 H(+). Its function is as follows. Allows the formation of correctly charged Asn-tRNA(Asn) or Gln-tRNA(Gln) through the transamidation of misacylated Asp-tRNA(Asn) or Glu-tRNA(Gln) in organisms which lack either or both of asparaginyl-tRNA or glutaminyl-tRNA synthetases. The reaction takes place in the presence of glutamine and ATP through an activated phospho-Asp-tRNA(Asn) or phospho-Glu-tRNA(Gln). In Gluconacetobacter diazotrophicus (strain ATCC 49037 / DSM 5601 / CCUG 37298 / CIP 103539 / LMG 7603 / PAl5), this protein is Aspartyl/glutamyl-tRNA(Asn/Gln) amidotransferase subunit C.